The following is a 1200-amino-acid chain: ATP-dependent helicase/deoxyribonuclease subunit B (1200 aa).

This sequence belongs to the helicase family. AddB/RexB type 2 subfamily. Heterodimer of AddA and RexB. Mg(2+) is required as a cofactor.

Its function is as follows. The heterodimer acts as both an ATP-dependent DNA helicase and an ATP-dependent, dual-direction single-stranded exonuclease. Recognizes the chi site generating a DNA molecule suitable for the initiation of homologous recombination. This subunit has 5' -&gt; 3' nuclease activity but not helicase activity. The protein is ATP-dependent helicase/deoxyribonuclease subunit B of Lactiplantibacillus plantarum (strain ATCC BAA-793 / NCIMB 8826 / WCFS1) (Lactobacillus plantarum).